The following is a 313-amino-acid chain: Urease accessory protein UreD (313 aa).

Residues 1–30 (MTDLSFPGQAASPGEGAGQTPSGGSGHRFD) form a disordered region. Positions 15–26 (EGAGQTPSGGSG) are enriched in gly residues.

Belongs to the UreD family. In terms of assembly, ureD, UreF and UreG form a complex that acts as a GTP-hydrolysis-dependent molecular chaperone, activating the urease apoprotein by helping to assemble the nickel containing metallocenter of UreC. The UreE protein probably delivers the nickel.

It is found in the cytoplasm. In terms of biological role, required for maturation of urease via the functional incorporation of the urease nickel metallocenter. The chain is Urease accessory protein UreD from Chromohalobacter salexigens (strain ATCC BAA-138 / DSM 3043 / CIP 106854 / NCIMB 13768 / 1H11).